The following is a 261-amino-acid chain: Spermatogenesis-associated protein 46 (261 aa).

The interval 140 to 159 (SSSSSPENTCPREATKKSRH) is disordered.

Testis-specific.

It is found in the nucleus membrane. Plays a role in spermiogenesis and fertilization. The chain is Spermatogenesis-associated protein 46 from Homo sapiens (Human).